Here is a 333-residue protein sequence, read N- to C-terminus: UDP-glucose 4-epimerase (333 aa).

NAD(+)-binding positions include 11 to 12 (YI), 32 to 37 (DSLVTG), 52 to 53 (DL), 75 to 79 (FAAYS), Asn-94, Thr-119, Tyr-143, Lys-147, and Phe-171. Positions 119 and 143 each coordinate substrate. Tyr-143 (proton acceptor) is an active-site residue. Substrate-binding positions include Asn-172, 191–192 (HL), 208–210 (MIF), Arg-223, and 284–287 (RSGD).

This sequence belongs to the NAD(P)-dependent epimerase/dehydratase family. Homodimer. NAD(+) serves as cofactor.

The enzyme catalyses UDP-alpha-D-glucose = UDP-alpha-D-galactose. Its pathway is carbohydrate metabolism; galactose metabolism. Functionally, involved in the metabolism of galactose. Catalyzes the conversion of UDP-galactose (UDP-Gal) to UDP-glucose (UDP-Glc) through a mechanism involving the transient reduction of NAD. This chain is UDP-glucose 4-epimerase (galE), found in Streptococcus mutans serotype c (strain ATCC 700610 / UA159).